Consider the following 178-residue polypeptide: Interleukin-10 (178 aa).

Positions 1-18 are cleaved as a signal peptide; it reads MHSSALLCCLVLLTGVRA. Disulfide bonds link C30–C126 and C80–C132. N134 carries N-linked (GlcNAc...) asparagine glycosylation.

This sequence belongs to the IL-10 family. In terms of assembly, homodimer. Interacts with IL10RA and IL10RB.

It is found in the secreted. Major immune regulatory cytokine that acts on many cells of the immune system where it has profound anti-inflammatory functions, limiting excessive tissue disruption caused by inflammation. Mechanistically, IL10 binds to its heterotetrameric receptor comprising IL10RA and IL10RB leading to JAK1 and STAT2-mediated phosphorylation of STAT3. In turn, STAT3 translocates to the nucleus where it drives expression of anti-inflammatory mediators. Targets antigen-presenting cells (APCs) such as macrophages and monocytes and inhibits their release of pro-inflammatory cytokines including granulocyte-macrophage colony-stimulating factor /GM-CSF, granulocyte colony-stimulating factor/G-CSF, IL-1 alpha, IL-1 beta, IL-6, IL-8 and TNF-alpha. Also interferes with antigen presentation by reducing the expression of MHC-class II and co-stimulatory molecules, thereby inhibiting their ability to induce T cell activation. In addition, controls the inflammatory response of macrophages by reprogramming essential metabolic pathways including mTOR signaling. This chain is Interleukin-10 (IL10), found in Macaca fascicularis (Crab-eating macaque).